Here is a 396-residue protein sequence, read N- to C-terminus: Phosphoglycerate kinase (396 aa).

Substrate-binding positions include 21–23 (DFN), Arg-36, 59–62 (HLGK), Arg-119, and Arg-156. ATP is bound by residues Lys-206, Gly-294, Glu-325, and 352 to 355 (GGDS).

It belongs to the phosphoglycerate kinase family. In terms of assembly, monomer.

The protein resides in the cytoplasm. It catalyses the reaction (2R)-3-phosphoglycerate + ATP = (2R)-3-phospho-glyceroyl phosphate + ADP. It functions in the pathway carbohydrate degradation; glycolysis; pyruvate from D-glyceraldehyde 3-phosphate: step 2/5. The sequence is that of Phosphoglycerate kinase from Listeria monocytogenes serovar 1/2a (strain ATCC BAA-679 / EGD-e).